An 831-amino-acid chain; its full sequence is Cation/H(+) symporter 13 (831 aa).

A run of 12 helical transmembrane segments spans residues Tyr-50–Phe-70, Val-89–Ala-109, Lys-112–Leu-132, Ile-147–Phe-167, Leu-214–Asn-234, Met-250–Thr-270, Val-282–Met-302, Gly-303–Leu-323, Phe-334–Phe-354, Val-364–Ala-384, Leu-397–Trp-417, and Leu-430–Tyr-450.

Belongs to the monovalent cation:proton antiporter 2 (CPA2) transporter (TC 2.A.37) family. CHX (TC 2.A.37.4) subfamily. Preferentially expressed in pollen before and after germination. Detected in pollen grains within anthers of the flower buds or in pollen on fully open flowers and on the stigma, and in pollen tubes growing in the style. Weakly expressed in roots.

The protein localises to the cell membrane. Its function is as follows. High-affinity potassium transporter that plays a role in K(+) acquisition. May operate as a K(+)/H(+) symporter. This Arabidopsis thaliana (Mouse-ear cress) protein is Cation/H(+) symporter 13 (CHX13).